Reading from the N-terminus, the 361-residue chain is Pseudouridine-5'-phosphate glycosidase (361 aa).

The active-site Proton donor is E27. Substrate contacts are provided by K88 and V108. Position 140 (D140) interacts with Mn(2+). S142–D144 is a substrate binding site. The active-site Nucleophile is the K161. The interval D306–P361 is disordered. Residues P312 to A333 show a composition bias toward pro residues. Residues A334 to A354 show a composition bias toward low complexity.

The protein belongs to the pseudouridine-5'-phosphate glycosidase family. As to quaternary structure, homotrimer. Requires Mn(2+) as cofactor.

It catalyses the reaction D-ribose 5-phosphate + uracil = psi-UMP + H2O. Its function is as follows. Catalyzes the reversible cleavage of pseudouridine 5'-phosphate (PsiMP) to ribose 5-phosphate and uracil. Functions biologically in the cleavage direction, as part of a pseudouridine degradation pathway. This is Pseudouridine-5'-phosphate glycosidase from Frankia alni (strain DSM 45986 / CECT 9034 / ACN14a).